A 459-amino-acid chain; its full sequence is Cysteine--tRNA ligase (459 aa).

Cys-28 is a Zn(2+) binding site. A 'HIGH' region motif is present at residues 30–40; the sequence is VTIYDLCHIGH. Cys-209, His-234, and Glu-238 together coordinate Zn(2+). Positions 266–270 match the 'KMSKS' region motif; that stretch reads KMSKS. An ATP-binding site is contributed by Lys-269.

This sequence belongs to the class-I aminoacyl-tRNA synthetase family. Monomer. It depends on Zn(2+) as a cofactor.

The protein resides in the cytoplasm. It carries out the reaction tRNA(Cys) + L-cysteine + ATP = L-cysteinyl-tRNA(Cys) + AMP + diphosphate. The chain is Cysteine--tRNA ligase from Shewanella amazonensis (strain ATCC BAA-1098 / SB2B).